A 214-amino-acid chain; its full sequence is MPGYSDYIIRNASGLIPMVIEQTSRGERSYDIYSRLLKERIIFLLGEVEDHMANLVVAQLLFLESENPEKDISLYINSPGGVVTAGLAIYDTMQFIKPDVSTLCIGQAASAAALLLCAGAEGKRFCLPNSRVMIHQPLGGYRGQATDIEIHARETLAVRERLNNIMAKHTKKTPDQIMRDTERDNFMSATQAMEYGLIDKVLYDRQVAGHSTDL.

The active-site Nucleophile is the serine 110. Residue histidine 135 is part of the active site.

This sequence belongs to the peptidase S14 family. Fourteen ClpP subunits assemble into 2 heptameric rings which stack back to back to give a disk-like structure with a central cavity, resembling the structure of eukaryotic proteasomes.

The protein localises to the cytoplasm. The enzyme catalyses Hydrolysis of proteins to small peptides in the presence of ATP and magnesium. alpha-casein is the usual test substrate. In the absence of ATP, only oligopeptides shorter than five residues are hydrolyzed (such as succinyl-Leu-Tyr-|-NHMec, and Leu-Tyr-Leu-|-Tyr-Trp, in which cleavage of the -Tyr-|-Leu- and -Tyr-|-Trp bonds also occurs).. Its function is as follows. Cleaves peptides in various proteins in a process that requires ATP hydrolysis. Has a chymotrypsin-like activity. Plays a major role in the degradation of misfolded proteins. The chain is ATP-dependent Clp protease proteolytic subunit from Legionella pneumophila (strain Corby).